The chain runs to 274 residues: S-adenosylmethionine decarboxylase proenzyme (274 aa).

Ser-119 acts as the Schiff-base intermediate with substrate; via pyruvic acid in catalysis. Ser-119 is subject to Pyruvic acid (Ser); by autocatalysis. Catalysis depends on His-124, which acts as the Proton acceptor; for processing activity. Cys-147 functions as the Proton donor; for catalytic activity in the catalytic mechanism.

Belongs to the prokaryotic AdoMetDC family. Type 2 subfamily. Heterooctamer of four alpha and four beta chains arranged as a tetramer of alpha/beta heterodimers. It depends on pyruvate as a cofactor. In terms of processing, is synthesized initially as an inactive proenzyme. Formation of the active enzyme involves a self-maturation process in which the active site pyruvoyl group is generated from an internal serine residue via an autocatalytic post-translational modification. Two non-identical subunits are generated from the proenzyme in this reaction, and the pyruvate is formed at the N-terminus of the alpha chain, which is derived from the carboxyl end of the proenzyme. The post-translation cleavage follows an unusual pathway, termed non-hydrolytic serinolysis, in which the side chain hydroxyl group of the serine supplies its oxygen atom to form the C-terminus of the beta chain, while the remainder of the serine residue undergoes an oxidative deamination to produce ammonia and the pyruvoyl group blocking the N-terminus of the alpha chain.

The enzyme catalyses S-adenosyl-L-methionine + H(+) = S-adenosyl 3-(methylsulfanyl)propylamine + CO2. It participates in amine and polyamine biosynthesis; S-adenosylmethioninamine biosynthesis; S-adenosylmethioninamine from S-adenosyl-L-methionine: step 1/1. Functionally, catalyzes the decarboxylation of S-adenosylmethionine to S-adenosylmethioninamine (dcAdoMet), the propylamine donor required for the synthesis of the polyamines spermine and spermidine from the diamine putrescine. In Clostridium acetobutylicum (strain ATCC 824 / DSM 792 / JCM 1419 / IAM 19013 / LMG 5710 / NBRC 13948 / NRRL B-527 / VKM B-1787 / 2291 / W), this protein is S-adenosylmethionine decarboxylase proenzyme.